We begin with the raw amino-acid sequence, 923 residues long: MATEKGHGRDDEERVPLTRGSTEFRNSIDSFDYSSSTASLSLAVIDRINNSTQDAALGEKGPRDDDDDRYWDDDVEYDVEDADYIPSGGKPMHKSVKIALWTLLFLSLGGWSLAFVLFIFRSHDTYETPISSEDNISSGGLRGDRITLDDVLGEEWMPRHHFISWFPGPNGEDGLLLEKDGPGSTGYLRVEDIVSRKDTKSSKGSIVLMRKNTFTVGGETVICSQVWPSPDLKTVLVLSEKKQNWRHSFTGKYWLFDVDTQTGQPLDPAAQDQRIQLASWSPQSDAVVFTRDNNMFLRKLSSKEVTTITSDGGVDLFYGVPDWVYEEEVFSGNSATWWAHDGNYIAFLRTNESAVPEYPLQYFVSRPSGEDPNLGEENYPEVREIKYPKAGAPNPIVDLQFYDVRKGEIFSVDVADRFPDDNRLIIEVLWASNGKVLVRETNRESDILIIAAINVLSRTGKIVRKEDINALDGGWVEPTQSTRFIPADPSNGRPEDGYIDTVIHEGRDQLAYFTPLDNPEPLILTKGPSEVVNSPSGVDLKRGLVYFVVAGNEPWERHVYSVKFDGTALQPVTNVSESSYYDVSFSDGAGYALLNFQGPKVPWQKVISTPANENPFEEIIEQNNHLSRKLRLFSLESKVFQYINIDGFSLPVLERRPPNFDPTKKYPVLFYLYGGPGSQTVDKKFRVDFQSYVASTLGYIVVTVDGRGTGYIGRKSLSIVRGKLGHYEARDQIEVAKKWAAKPYVDESRMAIWGWSYGGFMTLKTIEEDGGRTFQYGMAVAPVTDWRYYDSIYAERYMHTPQHNPQGYDSSAISNTTALANNVRFLVMHGTADDNVHIQNTLTLLDKLDLANVDNYDVHVFPDSDHNINFHNAHKIVYTRLADWLVNAFNGQWLKTNNPTPNDSLFRRAATWAGLSYNFKHLH.

The span at 1 to 16 (MATEKGHGRDDEERVP) shows a compositional bias: basic and acidic residues. Positions 1–21 (MATEKGHGRDDEERVPLTRGS) are disordered. The Cytoplasmic segment spans residues 1-99 (MATEKGHGRD…KPMHKSVKIA (99 aa)). A helical; Signal-anchor for type II membrane protein transmembrane segment spans residues 100–120 (LWTLLFLSLGGWSLAFVLFIF). Residues 121–923 (RSHDTYETPI…GLSYNFKHLH (803 aa)) lie on the Vacuolar side of the membrane. Asn-135, Asn-351, and Asn-574 each carry an N-linked (GlcNAc...) asparagine glycan. Residue Ser-756 is the Charge relay system of the active site. N-linked (GlcNAc...) asparagine glycosylation is present at Asn-815. Residues Asp-833 and His-866 each act as charge relay system in the active site. The N-linked (GlcNAc...) asparagine glycan is linked to Asn-902.

It belongs to the peptidase S9B family.

It localises to the vacuole membrane. It catalyses the reaction Release of an N-terminal dipeptide, Xaa-Yaa-|-Zaa-, from a polypeptide, preferentially when Yaa is Pro, provided Zaa is neither Pro nor hydroxyproline.. In terms of biological role, type IV dipeptidyl-peptidase which removes N-terminal dipeptides sequentially from polypeptides having unsubstituted N-termini provided that the penultimate residue is proline. The protein is Probable dipeptidyl-aminopeptidase B (DAPB) of Ajellomyces capsulatus (strain G186AR / H82 / ATCC MYA-2454 / RMSCC 2432) (Darling's disease fungus).